A 207-amino-acid chain; its full sequence is dTDP-4-dehydrorhamnose 3-epimerase (207 aa).

Substrate contacts are provided by residues R23, D28, Q47 to N49, and R59. The active-site Proton acceptor is the H62. Substrate is bound by residues K72 and H119. The Proton donor role is filled by Y132. E143 and R167 together coordinate substrate.

It belongs to the dTDP-4-dehydrorhamnose 3,5-epimerase family.

It functions in the pathway antibiotic biosynthesis; novobiocin biosynthesis. In terms of biological role, dTDP-6-deoxy-D-xylo-4-hexulose 3-epimerase that acts together with NovU to catalyze the formation of dTDP-4-keto-6-deoxy-5-C-methyl-L-lyxo-hexose from dTDP-4-keto-6-deoxy-D-glucose in the novobiocin biosynthesis pathway, an aminocoumarin family antibiotic that targets bacterial DNA gyrases. This chain is dTDP-4-dehydrorhamnose 3-epimerase, found in Streptomyces niveus (Streptomyces spheroides).